Here is a 27-residue protein sequence, read N- to C-terminus: Equinin A (27 aa).

The segment covering Ala-1–Asp-13 has biased composition (basic and acidic residues). The disordered stretch occupies residues Ala-1–Gly-27.

It localises to the secreted. In terms of biological role, peptide with unknown function. Does not show antimicrobial and hemolytic activities. The chain is Equinin A from Actinia equina (Beadlet anemone).